Consider the following 489-residue polypeptide: Cobyric acid synthase (489 aa).

Residues 251–444 (GLIIAVIRLP…LHGIFANDTF (194 aa)) enclose the GATase cobBQ-type domain. Cys329 serves as the catalytic Nucleophile. Residue His436 is part of the active site.

It belongs to the CobB/CobQ family. CobQ subfamily.

It functions in the pathway cofactor biosynthesis; adenosylcobalamin biosynthesis. Its function is as follows. Catalyzes amidations at positions B, D, E, and G on adenosylcobyrinic A,C-diamide. NH(2) groups are provided by glutamine, and one molecule of ATP is hydrogenolyzed for each amidation. This chain is Cobyric acid synthase, found in Chloroflexus aurantiacus (strain ATCC 29366 / DSM 635 / J-10-fl).